The chain runs to 306 residues: Elongation factor Ts (306 aa).

The interval 80 to 83 (TDFV) is involved in Mg(2+) ion dislocation from EF-Tu.

The protein belongs to the EF-Ts family.

It localises to the cytoplasm. Functionally, associates with the EF-Tu.GDP complex and induces the exchange of GDP to GTP. It remains bound to the aminoacyl-tRNA.EF-Tu.GTP complex up to the GTP hydrolysis stage on the ribosome. In Clostridium novyi (strain NT), this protein is Elongation factor Ts.